Reading from the N-terminus, the 321-residue chain is Ribosomal RNA small subunit methyltransferase H (321 aa).

Residues 40-42 (GGH), Asp60, Phe84, Asp106, and Gln113 each bind S-adenosyl-L-methionine.

The protein belongs to the methyltransferase superfamily. RsmH family.

Its subcellular location is the cytoplasm. The enzyme catalyses cytidine(1402) in 16S rRNA + S-adenosyl-L-methionine = N(4)-methylcytidine(1402) in 16S rRNA + S-adenosyl-L-homocysteine + H(+). Specifically methylates the N4 position of cytidine in position 1402 (C1402) of 16S rRNA. The chain is Ribosomal RNA small subunit methyltransferase H from Histophilus somni (strain 2336) (Haemophilus somnus).